A 296-amino-acid chain; its full sequence is HTH-type transcriptional regulator IlvR (296 aa).

In terms of domain architecture, HTH lysR-type spans Met-1 to Thr-58. A DNA-binding region (H-T-H motif) is located at residues Phe-18–Gln-37.

This sequence belongs to the LysR transcriptional regulatory family.

In terms of biological role, positively regulates the expression of the ilvD gene while negatively autoregulating its own expression. This is HTH-type transcriptional regulator IlvR (ilvR) from Caulobacter vibrioides (strain ATCC 19089 / CIP 103742 / CB 15) (Caulobacter crescentus).